The primary structure comprises 912 residues: Eukaryotic translation initiation factor 3 subunit C (912 aa).

A disordered region spans residues 1 to 44; it reads MSRFFTTGSDSESESSLSGEELVTKPVGGNYGKQPLLLSEDEED. The segment covering 8–21 has biased composition (low complexity); it reads GSDSESESSLSGEE. Phosphoserine occurs at positions 9, 11, 13, 15, 16, 18, and 39. Residue K99 is modified to N6-acetyllysine. 2 disordered regions span residues 157-305 and 521-541; these read TNYK…RVRG and QLTPPEGSSKSEQDQAENEGE. S166, S178, S181, and S182 each carry phosphoserine. Over residues 166–190 the composition is skewed to acidic residues; it reads SADEDAEKNEEDSEGSSDEDEDDDG. The span at 199 to 215 shows a compositional bias: basic and acidic residues; that stretch reads KKSEAPSGDSRKFLKKE. The segment covering 216–229 has biased composition (acidic residues); it reads DEDEDSEESEDSEA. Over residues 260-277 the composition is skewed to basic and acidic residues; that stretch reads PTTEEDKKAAEKKREDKA. Positions 521 to 530 are enriched in polar residues; sequence QLTPPEGSSK. T523 carries the post-translational modification Phosphothreonine. K642 is subject to N6-acetyllysine. In terms of domain architecture, PCI spans 672-848; the sequence is FHLHINLELL…QTVVMHRTEP (177 aa). A disordered region spans residues 884–912; sequence FRDQKDGYRKNEGYMRRGGYRQQQSQTAY. Positions 885 to 898 are enriched in basic and acidic residues; it reads RDQKDGYRKNEGYM. S908 bears the Phosphoserine mark.

The protein belongs to the eIF-3 subunit C family. In terms of assembly, component of the eukaryotic translation initiation factor 3 (eIF-3) complex, which is composed of 13 subunits: EIF3A, EIF3B, EIF3C, EIF3D, EIF3E, EIF3F, EIF3G, EIF3H, EIF3I, EIF3J, EIF3K, EIF3L and EIF3M. The eIF-3 complex appears to include 3 stable modules: module A is composed of EIF3A, EIF3B, EIF3G and EIF3I; module B is composed of EIF3F, EIF3H, and EIF3M; and module C is composed of EIF3C, EIF3D, EIF3E, EIF3K and EIF3L. EIF3C of module C binds EIF3B of module A and EIF3H of module B, thereby linking the three modules. EIF3J is a labile subunit that binds to the eIF-3 complex via EIF3B. The eIF-3 complex interacts with RPS6KB1 under conditions of nutrient depletion. Mitogenic stimulation leads to binding and activation of a complex composed of MTOR and RPTOR, leading to phosphorylation and release of RPS6KB1 and binding of EIF4B to eIF-3. Identified in a HCV IRES-mediated translation complex, at least composed of EIF3C, IGF2BP1, RPS3 and HCV RNA-replicon. Interacts with ALKBH4, IFIT1 and IFIT2. Interacts with BZW2/5MP1. Post-translationally, phosphorylated. Phosphorylation is enhanced upon serum stimulation.

The protein localises to the cytoplasm. In terms of biological role, component of the eukaryotic translation initiation factor 3 (eIF-3) complex, which is required for several steps in the initiation of protein synthesis. The eIF-3 complex associates with the 40S ribosome and facilitates the recruitment of eIF-1, eIF-1A, eIF-2:GTP:methionyl-tRNAi and eIF-5 to form the 43S pre-initiation complex (43S PIC). The eIF-3 complex stimulates mRNA recruitment to the 43S PIC and scanning of the mRNA for AUG recognition. The eIF-3 complex is also required for disassembly and recycling of post-termination ribosomal complexes and subsequently prevents premature joining of the 40S and 60S ribosomal subunits prior to initiation. The eIF-3 complex specifically targets and initiates translation of a subset of mRNAs involved in cell proliferation, including cell cycling, differentiation and apoptosis, and uses different modes of RNA stem-loop binding to exert either translational activation or repression. In Bos taurus (Bovine), this protein is Eukaryotic translation initiation factor 3 subunit C.